The following is a 373-amino-acid chain: Transaldolase (373 aa).

The active-site Schiff-base intermediate with substrate is the lysine 143.

This sequence belongs to the transaldolase family. Type 2 subfamily.

Its subcellular location is the cytoplasm. It carries out the reaction D-sedoheptulose 7-phosphate + D-glyceraldehyde 3-phosphate = D-erythrose 4-phosphate + beta-D-fructose 6-phosphate. It functions in the pathway carbohydrate degradation; pentose phosphate pathway; D-glyceraldehyde 3-phosphate and beta-D-fructose 6-phosphate from D-ribose 5-phosphate and D-xylulose 5-phosphate (non-oxidative stage): step 2/3. Functionally, transaldolase is important for the balance of metabolites in the pentose-phosphate pathway. The polypeptide is Transaldolase (Mycobacterium ulcerans (strain Agy99)).